Consider the following 529-residue polypeptide: CTP synthase (529 aa).

The segment at 1 to 267 is amidoligase domain; it reads MKEAKFIFVT…DTQILEHFHL (267 aa). S15 contributes to the CTP binding site. S15 is a UTP binding site. Residues 16–21 and D73 contribute to the ATP site; that span reads SLGKGL. D73 and E141 together coordinate Mg(2+). CTP-binding positions include 148–150, 188–193, and K224; these read DIE and KTKPTQ. Residues 188–193 and K224 each bind UTP; that span reads KTKPTQ. The 238-residue stretch at 292 to 529 folds into the Glutamine amidotransferase type-1 domain; that stretch reads TVSIVGKYTE…SFVKAAIDKK (238 aa). Residue G354 coordinates L-glutamine. C381 (nucleophile; for glutamine hydrolysis) is an active-site residue. L-glutamine contacts are provided by residues 382 to 385, E405, and R459; that span reads LGMQ. Active-site residues include H504 and E506.

Belongs to the CTP synthase family. In terms of assembly, homotetramer.

It carries out the reaction UTP + L-glutamine + ATP + H2O = CTP + L-glutamate + ADP + phosphate + 2 H(+). The catalysed reaction is L-glutamine + H2O = L-glutamate + NH4(+). The enzyme catalyses UTP + NH4(+) + ATP = CTP + ADP + phosphate + 2 H(+). It functions in the pathway pyrimidine metabolism; CTP biosynthesis via de novo pathway; CTP from UDP: step 2/2. Its activity is regulated as follows. Allosterically activated by GTP, when glutamine is the substrate; GTP has no effect on the reaction when ammonia is the substrate. The allosteric effector GTP functions by stabilizing the protein conformation that binds the tetrahedral intermediate(s) formed during glutamine hydrolysis. Inhibited by the product CTP, via allosteric rather than competitive inhibition. In terms of biological role, catalyzes the ATP-dependent amination of UTP to CTP with either L-glutamine or ammonia as the source of nitrogen. Regulates intracellular CTP levels through interactions with the four ribonucleotide triphosphates. In Wolbachia pipientis wMel, this protein is CTP synthase.